The primary structure comprises 1200 residues: SR-related and CTD-associated factor 4 (1200 aa).

In terms of domain architecture, CID spans 1-139; the sequence is MDAVNAFNQE…PLLDMAAGTS (139 aa). Lys49 carries the N6-acetyllysine modification. The segment covering 140-153 has biased composition (polar residues); the sequence is NAAPGAENVTNNEG. Disordered regions lie at residues 140–172, 299–324, and 346–566; these read NAAP…PTNS, VPAS…MQQP, and SMQH…QIKS. Ser154 carries the post-translational modification Phosphoserine. Pro residues-rich tracts occupy residues 367–390 and 399–461; these read APPP…PGMP and LPQP…PPVQ. Residues 462 to 471 are compositionally biased toward low complexity; it reads PTFQPTFQPQ. Over residues 493-503 the composition is skewed to basic and acidic residues; sequence EVKRHVPESRK. Residues 504–541 show a composition bias toward basic residues; sequence SRSRSPKRRRSRSGSRSRRSRHRRSRSRSRDRRRHSPR. Over residues 543–558 the composition is skewed to basic and acidic residues; sequence RSQERRDREKERERRQ. Residues 574–648 form the RRM domain; sequence TTLWVGQLDK…KSIKIAWALN (75 aa). Disordered stretches follow at residues 696–724, 834–875, and 927–1200; these read WKGI…VSPI, VSGA…SLLG, and PPHM…EAPR. A Phosphoserine modification is found at Ser722. Composition is skewed to pro residues over residues 856–868 and 927–958; these read PAAP…PPVT and PPHM…PPHG. The span at 965 to 978 shows a compositional bias: gly residues; the sequence is GMPGLGGPGPGPGG. Positions 986 to 1036 are enriched in low complexity; it reads QQQPQQQQQQQQQQQQQQQQQQQQPPPQQSQTQQQPAPSQQPAPAQQQPQQ. A Phosphoserine modification is found at Ser1058. The segment covering 1063–1139 has biased composition (basic and acidic residues); that stretch reads VENDRERYGS…RGKEKHEVAD (77 aa). Residues 1153–1162 show a composition bias toward polar residues; sequence QVGNTDTVSE. A Phosphoserine modification is found at Ser1178.

Interacts with POLR2A; via C-terminal heptapeptide repeat domain (CTD) phosphorylated at 'Ser-2' and 'Ser-5'.

The protein resides in the nucleus. Its function is as follows. Anti-terminator protein required to prevent early mRNA termination during transcription. Together with SCAF8, acts by suppressing the use of early, alternative poly(A) sites, thereby preventing the accumulation of non-functional truncated proteins. Mechanistically, associates with the phosphorylated C-terminal heptapeptide repeat domain (CTD) of the largest RNA polymerase II subunit (POLR2A), and subsequently binds nascent RNA upstream of early polyadenylation sites to prevent premature mRNA transcript cleavage and polyadenylation. Independently of SCAF8, also acts as a suppressor of transcriptional readthrough. The protein is SR-related and CTD-associated factor 4 of Rattus norvegicus (Rat).